The sequence spans 352 residues: Ribosomal RNA large subunit methyltransferase M (352 aa).

Residues Ser187, 218-221 (APGG), Asp237, Asp257, and Asp273 contribute to the S-adenosyl-L-methionine site. The Proton acceptor role is filled by Lys302.

Belongs to the class I-like SAM-binding methyltransferase superfamily. RNA methyltransferase RlmE family. RlmM subfamily. In terms of assembly, monomer.

The protein localises to the cytoplasm. The enzyme catalyses cytidine(2498) in 23S rRNA + S-adenosyl-L-methionine = 2'-O-methylcytidine(2498) in 23S rRNA + S-adenosyl-L-homocysteine + H(+). Functionally, catalyzes the 2'-O-methylation at nucleotide C2498 in 23S rRNA. The chain is Ribosomal RNA large subunit methyltransferase M from Methylococcus capsulatus (strain ATCC 33009 / NCIMB 11132 / Bath).